The chain runs to 406 residues: Sprouty-related, EVH1 domain-containing protein 1 (406 aa).

One can recognise a WH1 domain in the interval 3-120 (GEQEPDDSYA…RGIRRAIEDL (118 aa)). A disordered region spans residues 124–154 (LPASCHGESETSEDGPQVNKEDHYSTHNNDH). Basic and acidic residues predominate over residues 142–154 (NKEDHYSTHNNDH). The region spanning 195 to 247 (PIRHVSFQDEDEIVRINPRDMIIRRYADYRHPDIFRNDVDREEPEDVTFFTKT) is the KBD domain. The region spanning 296–404 (SCVYCQERFN…CGCCGGKHKA (109 aa)) is the SPR domain.

In terms of processing, palmitoylated by ZDHHC17/HIP14. Ubiquitinated. Post-translationally, phosphorylated on tyrosine.

The protein resides in the cell membrane. In terms of biological role, tyrosine kinase substrate that inhibits growth-factor-mediated activation of MAP kinase. The polypeptide is Sprouty-related, EVH1 domain-containing protein 1 (spred1) (Xenopus tropicalis (Western clawed frog)).